The sequence spans 211 residues: uncharacterized protein (211 aa).

This is an uncharacterized protein from Treponema pallidum (strain Nichols).